We begin with the raw amino-acid sequence, 78 residues long: UPF0291 protein Exig_1097 (78 aa).

A disordered region spans residues 57-78 (EEGTDVTPEKLKQAQEEERNKQ). Over residues 63 to 78 (TPEKLKQAQEEERNKQ) the composition is skewed to basic and acidic residues.

It belongs to the UPF0291 family.

The protein resides in the cytoplasm. The protein is UPF0291 protein Exig_1097 of Exiguobacterium sibiricum (strain DSM 17290 / CCUG 55495 / CIP 109462 / JCM 13490 / 255-15).